The primary structure comprises 729 residues: Bromo and FHA domain-containing protein DDB_G0267958 (729 aa).

Residues 46–79 (LPIPNTSNTNPPMNQSSSPTTTTTTPTTTTTPTT) show a composition bias toward low complexity. Residues 46–83 (LPIPNTSNTNPPMNQSSSPTTTTTTPTTTTTPTTAEPA) are disordered. Residues 112–167 (LIIGSDTELADIQVVRPGIYPKHVEIIYDKEKKKFYLNPLIDPKDSDNVRLNFVPF) enclose the FHA domain. Composition is skewed to low complexity over residues 208-221 (IPSNTPTCITNTPI), 229-275 (PPSS…ATKT), and 283-306 (PTKTTTTTTVTTSKPTVKPTAVKK). 2 disordered regions span residues 208-361 (IPSN…MSCK) and 403-442 (SRRPTAPVTPTKPTSTKKVTTPKKATVVKPPKESKVPKVP). A compositionally biased stretch (acidic residues) spans 310–341 (DDDYGDDYNEEEDDDDEEEEEEEEEEEEEEEV). Residues 315 to 352 (DDYNEEEDDDDEEEEEEEEEEEEEEEVESKQIKVVNSK) adopt a coiled-coil conformation. Positions 406 to 431 (PTAPVTPTKPTSTKKVTTPKKATVVK) are enriched in low complexity. The region spanning 498–617 (SNEKKEILKC…IELYKALSNS (120 aa)) is the Bromo domain. Positions 659-718 (SKNKEQTVPQEEDEEEEEEEEEEEEEEEEGEEGKEDEEEEEKEEEEGEENEEEEDVEIDD) form a coiled coil. Residues 659–729 (SKNKEQTVPQ…EIDQESDDDQ (71 aa)) form a disordered region. Residues 668–729 (QEEDEEEEEE…EIDQESDDDQ (62 aa)) show a composition bias toward acidic residues.

The protein is Bromo and FHA domain-containing protein DDB_G0267958 of Dictyostelium discoideum (Social amoeba).